A 433-amino-acid chain; its full sequence is Glutamate-1-semialdehyde 2,1-aminomutase (433 aa).

N6-(pyridoxal phosphate)lysine is present on Lys273.

It belongs to the class-III pyridoxal-phosphate-dependent aminotransferase family. HemL subfamily. Homodimer. The cofactor is pyridoxal 5'-phosphate.

It is found in the cytoplasm. The catalysed reaction is (S)-4-amino-5-oxopentanoate = 5-aminolevulinate. The protein operates within porphyrin-containing compound metabolism; protoporphyrin-IX biosynthesis; 5-aminolevulinate from L-glutamyl-tRNA(Glu): step 2/2. This Ralstonia nicotianae (strain ATCC BAA-1114 / GMI1000) (Ralstonia solanacearum) protein is Glutamate-1-semialdehyde 2,1-aminomutase.